Here is a 178-residue protein sequence, read N- to C-terminus: Large ribosomal subunit protein uL6 (178 aa).

It belongs to the universal ribosomal protein uL6 family. Part of the 50S ribosomal subunit.

Its function is as follows. This protein binds to the 23S rRNA, and is important in its secondary structure. It is located near the subunit interface in the base of the L7/L12 stalk, and near the tRNA binding site of the peptidyltransferase center. The polypeptide is Large ribosomal subunit protein uL6 (Helicobacter hepaticus (strain ATCC 51449 / 3B1)).